The primary structure comprises 687 residues: Sphingoid long chain base kinase 5 (687 aa).

A disordered region spans residues 1-20 (MTLKPSKRRKGRSRHSRKKQ). 2 S-palmitoyl cysteine; by AKR1 lipidation sites follow: cysteine 91 and cysteine 94. The segment covering 101-116 (IDRSETSTTDTSKDDL) has biased composition (basic and acidic residues). 2 disordered regions span residues 101–130 (IDRS…VNGQ) and 180–207 (DELE…SLLT). Low complexity predominate over residues 193-207 (NSLSRGSNSSSSLLT). Residues 266 to 405 (RRNKSIFVII…IDLMCCSQPS (140 aa)) enclose the DAGKc domain. ATP-binding positions include 276–278 (NPF) and threonine 308. 333–336 (SGDG) contacts substrate. Residue aspartate 335 is the Proton donor/acceptor of the active site. ATP is bound by residues glutamate 340, 366-368 (GSG), arginine 434, and arginine 440. The span at 506 to 524 (EYETENEDEDEDADADDED) shows a compositional bias: acidic residues. The tract at residues 506–525 (EYETENEDEDEDADADDEDS) is disordered. 652-654 (DGE) contacts ATP.

It is found in the golgi apparatus membrane. It catalyses the reaction (4R)-hydroxysphinganine + ATP = (4R)-hydroxysphinganine 1-phosphate + ADP + H(+). The enzyme catalyses a sphingoid base + ATP = a sphingoid 1-phosphate + ADP + H(+). The catalysed reaction is sphinganine + ATP = sphinganine 1-phosphate + ADP + H(+). Its function is as follows. Catalyzes the phosphorylation of the sphingoid long chain bases dihydrosphingosine (DHS or sphinganine) and phytosphingosine (PHS) to form dihydrosphingosine 1-phosphate (DHS-1P) and phytosphingosine 1-phosphate (PHS-1P) respectively. Redundant to LCB4, is only responsible for few percent of the total activity. Involved in the biosynthesis of sphingolipids and ceramides. Involved in heat-induced transient cell cycle arrest. Accumulation of phosphorylated sphingoid long chain bases (LCBPs) stimulates calcium influx and activates calcineurin signaling. Involved in heat-stress resistance. The protein is Sphingoid long chain base kinase 5 (LCB5) of Saccharomyces cerevisiae (strain ATCC 204508 / S288c) (Baker's yeast).